Here is a 221-residue protein sequence, read N- to C-terminus: Orotate phosphoribosyltransferase (221 aa).

Lys-26 contacts 5-phospho-alpha-D-ribose 1-diphosphate. 34–35 provides a ligand contact to orotate; it reads FF. 5-phospho-alpha-D-ribose 1-diphosphate contacts are provided by residues 72 to 73, Arg-98, Lys-99, Lys-102, His-104, and 123 to 131; these read YK and DDVISAGTS. Orotate contacts are provided by Ser-127 and Arg-155.

It belongs to the purine/pyrimidine phosphoribosyltransferase family. PyrE subfamily. In terms of assembly, homodimer. Mg(2+) is required as a cofactor.

The enzyme catalyses orotidine 5'-phosphate + diphosphate = orotate + 5-phospho-alpha-D-ribose 1-diphosphate. The protein operates within pyrimidine metabolism; UMP biosynthesis via de novo pathway; UMP from orotate: step 1/2. Catalyzes the transfer of a ribosyl phosphate group from 5-phosphoribose 1-diphosphate to orotate, leading to the formation of orotidine monophosphate (OMP). The protein is Orotate phosphoribosyltransferase of Janthinobacterium sp. (strain Marseille) (Minibacterium massiliensis).